We begin with the raw amino-acid sequence, 137 residues long: Fructose-bisphosphate aldolase C (137 aa).

Catalysis depends on Lys-3, which acts as the Schiff-base intermediate with dihydroxyacetone-P.

The protein belongs to the class I fructose-bisphosphate aldolase family. Homotetramer.

The catalysed reaction is beta-D-fructose 1,6-bisphosphate = D-glyceraldehyde 3-phosphate + dihydroxyacetone phosphate. It functions in the pathway carbohydrate degradation; glycolysis; D-glyceraldehyde 3-phosphate and glycerone phosphate from D-glucose: step 4/4. This Gallus gallus (Chicken) protein is Fructose-bisphosphate aldolase C (ALDOC).